A 216-amino-acid polypeptide reads, in one-letter code: ATP-dependent Clp protease proteolytic subunit 1 (216 aa).

Ser119 serves as the catalytic Nucleophile. His144 is a catalytic residue.

This sequence belongs to the peptidase S14 family. Fourteen ClpP subunits assemble into 2 heptameric rings which stack back to back to give a disk-like structure with a central cavity, resembling the structure of eukaryotic proteasomes.

The protein localises to the cytoplasm. It carries out the reaction Hydrolysis of proteins to small peptides in the presence of ATP and magnesium. alpha-casein is the usual test substrate. In the absence of ATP, only oligopeptides shorter than five residues are hydrolyzed (such as succinyl-Leu-Tyr-|-NHMec, and Leu-Tyr-Leu-|-Tyr-Trp, in which cleavage of the -Tyr-|-Leu- and -Tyr-|-Trp bonds also occurs).. Its function is as follows. Cleaves peptides in various proteins in a process that requires ATP hydrolysis. Has a chymotrypsin-like activity. Plays a major role in the degradation of misfolded proteins. This Cutibacterium acnes (strain DSM 16379 / KPA171202) (Propionibacterium acnes) protein is ATP-dependent Clp protease proteolytic subunit 1.